Here is a 221-residue protein sequence, read N- to C-terminus: H-2 class II histocompatibility antigen, A-Q alpha chain (221 aa).

The segment at 1 to 76 (GIVVYQSPGD…KRSNFTPATN (76 aa)) is alpha-1. The Extracellular portion of the chain corresponds to 1 to 183 (GIVVYQSPGD…IPAPMSELTE (183 aa)). Residues 77–170 (EAPQATVFPK…GLDEPVLKHW (94 aa)) are alpha-2. Residues 79 to 171 (PQATVFPKSP…LDEPVLKHWE (93 aa)) form the Ig-like C1-type domain. Cys99 and Cys155 form a disulfide bridge. Asn110 carries an N-linked (GlcNAc...) asparagine glycan. A connecting peptide region spans residues 171-183 (EPEIPAPMSELTE). Residues 184–209 (TVVCALGLSVGLVGIVVGTIFIIQGL) traverse the membrane as a helical segment. Over 210–221 (RSGGTSRPPGPL) the chain is Cytoplasmic.

This sequence belongs to the MHC class II family.

Its subcellular location is the membrane. The sequence is that of H-2 class II histocompatibility antigen, A-Q alpha chain (H2-Aa) from Mus musculus (Mouse).